A 184-amino-acid polypeptide reads, in one-letter code: Peptide deformylase 2 (184 aa).

Fe cation is bound by residues cysteine 110 and histidine 153. The active site involves glutamate 154. Histidine 157 serves as a coordination point for Fe cation.

It belongs to the polypeptide deformylase family. Requires Fe(2+) as cofactor.

The catalysed reaction is N-terminal N-formyl-L-methionyl-[peptide] + H2O = N-terminal L-methionyl-[peptide] + formate. Its function is as follows. Removes the formyl group from the N-terminal Met of newly synthesized proteins. Requires at least a dipeptide for an efficient rate of reaction. N-terminal L-methionine is a prerequisite for activity but the enzyme has broad specificity at other positions. The sequence is that of Peptide deformylase 2 from Geobacillus stearothermophilus (Bacillus stearothermophilus).